We begin with the raw amino-acid sequence, 131 residues long: Fumarate reductase subunit C (131 aa).

Transmembrane regions (helical) follow at residues 60-80 and 110-130; these read FVGF…LAAA and IKGL…VALF.

This sequence belongs to the FrdC family. In terms of assembly, part of an enzyme complex containing four subunits: a flavoprotein (FrdA), an iron-sulfur protein (FrdB), and two hydrophobic anchor proteins (FrdC and FrdD).

The protein resides in the cell inner membrane. Its function is as follows. Two distinct, membrane-bound, FAD-containing enzymes are responsible for the catalysis of fumarate and succinate interconversion; fumarate reductase is used in anaerobic growth, and succinate dehydrogenase is used in aerobic growth. Anchors the catalytic components of the fumarate reductase complex to the cell inner membrane, binds quinones. This is Fumarate reductase subunit C from Enterobacter sp. (strain 638).